Here is a 199-residue protein sequence, read N- to C-terminus: Elongation factor Ts (199 aa).

The interval Thr82 to Val85 is involved in Mg(2+) ion dislocation from EF-Tu.

Belongs to the EF-Ts family.

Its subcellular location is the cytoplasm. Associates with the EF-Tu.GDP complex and induces the exchange of GDP to GTP. It remains bound to the aminoacyl-tRNA.EF-Tu.GTP complex up to the GTP hydrolysis stage on the ribosome. In Leptospira interrogans serogroup Icterohaemorrhagiae serovar copenhageni (strain Fiocruz L1-130), this protein is Elongation factor Ts.